Reading from the N-terminus, the 303-residue chain is MPKLQLRSLASQDKIEEIFERFKPHAVIHTASPSYMDTKKTLMSKNVDGTKALLEAARTCSDTKAFVFTSSDEAIMPTQEPTSEENAHRYDENNAPNAPNTYALSKALAKRLVIAANSEELYTSVIRIPGIYGKYDDNFIPQLVSSMREKEHKMQVGNNTKVFEFLYVNKAAEAHIMAMKALLNPSTRDQVGGEDFFISDGKPQGLFDFCRRIYAAAGSPVRPEEVTSIPLSVMQTMASTMEWVYWVFTLGTVQPSLRRISMDHLDTGCCWSLDKARRILGYEPVQDQDKVIERTMDWTMKTF.

Residues S8–L9 and T30–S32 each bind NADP(+). Residue S71 participates in substrate binding. The disordered stretch occupies residues P77–P96. NADP(+) contacts are provided by residues Y102, K106, and I128–I131. Position 102 (Y102) interacts with substrate. The active-site Proton donor is the K106.

It belongs to the 3-beta-HSD family. Heterotetramer of ERG25, ERG26, ERG27 and ERG28. ERG28 acts as a scaffold to tether ERG27 and other 4,4-demethylation-related enzymes, forming a demethylation enzyme complex, in the endoplasmic reticulum.

The protein localises to the endoplasmic reticulum membrane. It functions in the pathway steroid metabolism; ergosterol biosynthesis. Sterol-4-alpha-carboxylate 3-dehydrogenase; part of the third module of ergosterol biosynthesis pathway that includes the late steps of the pathway. ERG26 is a catalytic component of the C-4 demethylation complex that catalyzes the conversion of 4,4-dimethylfecosterol into fecosterol via 4-methylfecosterol. The third module or late pathway involves the ergosterol synthesis itself through consecutive reactions that mainly occur in the endoplasmic reticulum (ER) membrane. Firstly, the squalene synthase ERG9 catalyzes the condensation of 2 farnesyl pyrophosphate moieties to form squalene, which is the precursor of all steroids. Squalene synthase is crucial for balancing the incorporation of farnesyl diphosphate (FPP) into sterol and nonsterol isoprene synthesis. Secondly, squalene is converted into lanosterol by the consecutive action of the squalene epoxidase ERG1 and the lanosterol synthase ERG7. Then, the delta(24)-sterol C-methyltransferase ERG6 methylates lanosterol at C-24 to produce eburicol. Eburicol is the substrate of the sterol 14-alpha demethylase encoded by CYP51A, CYP51B and CYP51C, to yield 4,4,24-trimethyl ergosta-8,14,24(28)-trienol. CYP51B encodes the enzyme primarily responsible for sterol 14-alpha-demethylation, and plays an essential role in ascospore formation. CYP51A encodes an additional sterol 14-alpha-demethylase, induced on ergosterol depletion and responsible for the intrinsic variation in azole sensitivity. The third CYP51 isoform, CYP51C, does not encode a sterol 14-alpha-demethylase, but is required for full virulence on host wheat ears. The C-14 reductase ERG24 then reduces the C14=C15 double bond which leads to 4,4-dimethylfecosterol. A sequence of further demethylations at C-4, involving the C-4 demethylation complex containing the C-4 methylsterol oxidases ERG25, the sterol-4-alpha-carboxylate 3-dehydrogenase ERG26 and the 3-keto-steroid reductase ERG27, leads to the production of fecosterol via 4-methylfecosterol. ERG28 has a role as a scaffold to help anchor ERG25, ERG26 and ERG27 to the endoplasmic reticulum. The C-8 sterol isomerase ERG2 then catalyzes the reaction which results in unsaturation at C-7 in the B ring of sterols and thus converts fecosterol to episterol. The sterol-C5-desaturases ERG3A and ERG3BB then catalyze the introduction of a C-5 double bond in the B ring to produce 5-dehydroepisterol. The C-22 sterol desaturases ERG5A and ERG5B further convert 5-dehydroepisterol into ergosta-5,7,22,24(28)-tetraen-3beta-ol by forming the C-22(23) double bond in the sterol side chain. Finally, ergosta-5,7,22,24(28)-tetraen-3beta-ol is substrate of the C-24(28) sterol reductase ERG4 to produce ergosterol. The chain is Sterol-4-alpha-carboxylate 3-dehydrogenase ERG26, decarboxylating from Gibberella zeae (strain ATCC MYA-4620 / CBS 123657 / FGSC 9075 / NRRL 31084 / PH-1) (Wheat head blight fungus).